The primary structure comprises 524 residues: Na(+)/H(+) antiporter NhaB (524 aa).

Helical transmembrane passes span 13-33 (FLGN…IINP), 98-118 (LLLV…LFVF), 140-160 (AFLS…SVSV), 239-259 (FFIR…LVCL), 304-324 (AIIG…VGLV), 325-345 (GLSV…HSLG), 358-378 (LTVF…TPII), 448-468 (ATPN…APLI), and 479-499 (ALPY…FLLV).

Belongs to the NhaB Na(+)/H(+) (TC 2.A.34) antiporter family.

The protein localises to the cell inner membrane. It catalyses the reaction 2 Na(+)(in) + 3 H(+)(out) = 2 Na(+)(out) + 3 H(+)(in). Na(+)/H(+) antiporter that extrudes sodium in exchange for external protons. This chain is Na(+)/H(+) antiporter NhaB, found in Yersinia pestis (strain Pestoides F).